Consider the following 130-residue polypeptide: Small ribosomal subunit protein uS11 (130 aa).

This sequence belongs to the universal ribosomal protein uS11 family. As to quaternary structure, part of the 30S ribosomal subunit. Interacts with proteins S7 and S18. Binds to IF-3.

Its function is as follows. Located on the platform of the 30S subunit, it bridges several disparate RNA helices of the 16S rRNA. Forms part of the Shine-Dalgarno cleft in the 70S ribosome. The polypeptide is Small ribosomal subunit protein uS11 (Bdellovibrio bacteriovorus (strain ATCC 15356 / DSM 50701 / NCIMB 9529 / HD100)).